Reading from the N-terminus, the 334-residue chain is RNA polymerase sigma factor RpoS (334 aa).

A disordered region spans residues 21–50; it reads PGIMLDESSADEQPSPRATPKATTSFSSKQ. Residues 61–94 form a sigma-70 factor domain-1 region; sequence DATQLYLNEIGFSPLLTPEEEVHFARLAQKGDPA. Residues 99–169 are sigma-70 factor domain-2; sequence MIESNLRLVV…ERAIMNQTRT (71 aa). An Interaction with polymerase core subunit RpoC motif is present at residues 123–126; it reads DLIE. The interval 179-254 is sigma-70 factor domain-3; that stretch reads ELNVYLRAAR…DDRPTDPCEL (76 aa). A sigma-70 factor domain-4 region spans residues 267–320; the sequence is WLTELTDKQREVVIRRFGLRGHESSTLEEVGQEIGLTRERVRQIQVEALKRLRE. Positions 293 to 312 form a DNA-binding region, H-T-H motif; the sequence is LEEVGQEIGLTRERVRQIQV.

Belongs to the sigma-70 factor family. RpoS subfamily. As to quaternary structure, interacts with the RNA polymerase core enzyme.

It is found in the cytoplasm. Its function is as follows. Sigma factors are initiation factors that promote the attachment of RNA polymerase to specific initiation sites and are then released. This sigma factor is the master transcriptional regulator of the stationary phase and the general stress response. The protein is RNA polymerase sigma factor RpoS of Pseudomonas aeruginosa (strain ATCC 15692 / DSM 22644 / CIP 104116 / JCM 14847 / LMG 12228 / 1C / PRS 101 / PAO1).